The sequence spans 340 residues: Serpentine receptor class alpha-23 (340 aa).

6 consecutive transmembrane segments (helical) span residues 34-54 (FIST…QALW), 114-136 (YFYY…DRLI), 150-170 (FIAI…FYIA), 199-219 (VRTV…YLSV), 250-270 (ILIV…NLLL), and 284-304 (VGAF…AIYF).

The protein belongs to the nematode receptor-like protein sra family.

It localises to the membrane. The protein is Serpentine receptor class alpha-23 (sra-23) of Caenorhabditis elegans.